Consider the following 306-residue polypeptide: D-alanine--D-alanine ligase (306 aa).

Positions 106-301 (KLLWQSAGIN…FEELVLKILG (196 aa)) constitute an ATP-grasp domain. 132–187 (AKELGLPLIVKPSREGSTIGLSKVREAGEVAAAWHLAARHDAMVLAEQFIEGTELT) is an ATP binding site. Mg(2+)-binding residues include Asp255, Glu268, and Asn270.

This sequence belongs to the D-alanine--D-alanine ligase family. Requires Mg(2+) as cofactor. The cofactor is Mn(2+).

The protein resides in the cytoplasm. The catalysed reaction is 2 D-alanine + ATP = D-alanyl-D-alanine + ADP + phosphate + H(+). Its pathway is cell wall biogenesis; peptidoglycan biosynthesis. Cell wall formation. This Nitrosospira multiformis (strain ATCC 25196 / NCIMB 11849 / C 71) protein is D-alanine--D-alanine ligase.